The chain runs to 283 residues: Putative cuticle collagen 79 (283 aa).

The tract at residues 59–283 (FKQQSSPPSP…ARSISKVAIQ (225 aa)) is disordered. Triple-helical region regions lie at residues 94-122 (GPPG…ENGG), 139-201 (GPRG…PGRK), and 204-269 (GEAG…DGAY). Pro residues predominate over residues 137–146 (PPGPRGPPGP). Residues 226-240 (TDGDDGVDGQPGDEG) show a composition bias toward acidic residues. Residues 253–265 (PQGEQGTEGQPGT) are compositionally biased toward low complexity.

This sequence belongs to the cuticular collagen family. In terms of assembly, collagen polypeptide chains are complexed within the cuticle by disulfide bonds and other types of covalent cross-links.

Functionally, nematode cuticles are composed largely of collagen-like proteins. The cuticle functions both as an exoskeleton and as a barrier to protect the worm from its environment. The chain is Putative cuticle collagen 79 (col-79) from Caenorhabditis elegans.